The chain runs to 313 residues: Sorting nexin-20 (313 aa).

The tract at residues 1-61 is disordered; sequence MASPQHPGGP…MTTRELQEHW (61 aa). Position 3 is a phosphoserine (Ser-3). Residues 29–38 show a composition bias toward pro residues; that stretch reads PPGPDLPCPG. The span at 45 to 55 shows a compositional bias: polar residues; it reads GPTSNSNMTTR. Positions 71 to 188 constitute a PX domain; sequence VRLLFEIASA…DFLTRPELCE (118 aa). Arg-113, Ser-115, Lys-140, and Arg-154 together coordinate a 1,2-diacyl-sn-glycero-3-phospho-(1D-myo-inositol-3-phosphate).

The protein belongs to the sorting nexin family. Interacts with SELPLG. Interaction with SELPLG is controversial.

The protein resides in the early endosome membrane. Its subcellular location is the cell membrane. It is found in the cytoplasm. It localises to the nucleus. May play a role in cellular vesicle trafficking. Has been proposed to function as a sorting protein that targets SELPLG into endosomes, but has no effect on SELPLG internalization from the cell surface, or on SELPLG-mediated cell-cell adhesion. The chain is Sorting nexin-20 (Snx20) from Rattus norvegicus (Rat).